Consider the following 553-residue polypeptide: MAAKEIRFSDDARQRMMKGVNTLANAVKATLGPRGRNAVLDKSFGAPTVTKDGVSVAKEIELEDKFENMGAQMLKEVSSQTSDIAGDGTTTATVLAQAILREGMKAVAAGMNPMDLKRGIDKGVSAATKYLADELSKPCETDTSIAQVGSISANSDESVGRIIADAMQKVGKEGVITVEEGSGLENELDVVEGMQFDRGYLSPYFINNQQSMKAELEDAFILLHDKKISNIRDLLPLLENVAKANKPLLIISEDIEGEALATLVVNSIRGIVKVAAVKAPGFGDRRKAMLQDIAVLTGGTVISEEVGLSLEKATLDDLGQAKKVDVSKEETTIVGGAGRHDDIMARVEQIRAQIEESTSEYDKEKLQERVAKLAGGVAVIKVGATSEIEMKEKKARVEDALHATRAAVEEGIVPGGGTALLRAQASLDGLEYANHDQEVGINIVRRAMEEPLRQIVYNAGGDGAVVVNEVRNGEGNYGYNAQSGEYGDLVEMGILDPTKVTRTALQNAASVAALMITTEVMVADLPKDDDAGAGGGMGDMGGMGGMGGMGGMM.

Residues 30–33 (TLGP), Lys-51, 87–91 (DGTTT), Gly-416, and Asp-496 each bind ATP.

Belongs to the chaperonin (HSP60) family. As to quaternary structure, forms a cylinder of 14 subunits composed of two heptameric rings stacked back-to-back. Interacts with the co-chaperonin GroES.

The protein resides in the cytoplasm. It catalyses the reaction ATP + H2O + a folded polypeptide = ADP + phosphate + an unfolded polypeptide.. In terms of biological role, together with its co-chaperonin GroES, plays an essential role in assisting protein folding. The GroEL-GroES system forms a nano-cage that allows encapsulation of the non-native substrate proteins and provides a physical environment optimized to promote and accelerate protein folding. This Alkalilimnicola ehrlichii (strain ATCC BAA-1101 / DSM 17681 / MLHE-1) protein is Chaperonin GroEL.